The following is a 1671-amino-acid chain: AF4/FMR2 family member lilli (1671 aa).

Disordered regions lie at residues 53–79, 126–304, 393–599, 723–761, 774–1162, and 1185–1311; these read YSQN…QQGI, SAPG…EKDV, LAGE…SNKW, DSGT…QLPG, PTQS…TTPH, and KLTP…LQIG. A compositionally biased stretch (basic and acidic residues) spans 70 to 79; sequence REKIERQQGI. Low complexity-rich tracts occupy residues 145-179 and 210-242; these read SLGH…QQQQ and PSSS…SSGG. Residue T416 is modified to Phosphothreonine. The span at 424-437 shows a compositional bias: basic and acidic residues; that stretch reads LKTEKNHSLEKQDS. The segment covering 439-450 has biased composition (acidic residues); that stretch reads LENDLELSESED. 2 positions are modified to phosphoserine: S446 and S448. Over residues 459–479 the composition is skewed to low complexity; it reads SAGNSSNSSESDSSESGSESS. Over residues 487–496 the composition is skewed to basic residues; that stretch reads HPNHQQHHHQ. 2 stretches are compositionally biased toward low complexity: residues 497 to 522 and 561 to 587; these read LQQQ…PQPL and PAGV…GSSS. The span at 588–599 shows a compositional bias: polar residues; that stretch reads NKTPSPTESNKW. The segment covering 723 to 755 has biased composition (low complexity); sequence DSGTSASGSSSSSSSSSDSAVGGEVVPMPGPGE. The span at 774–786 shows a compositional bias: polar residues; it reads PTQSQKAPPSNSV. The segment covering 800–810 has biased composition (basic residues); sequence QRQKKPRKKKA. S819 and S820 each carry phosphoserine. The a.T hook DNA-binding region spans 849 to 861; that stretch reads KKGRGRPRKQQQS. The span at 858–896 shows a compositional bias: low complexity; that stretch reads QQQSGGSGNLSSASAGSSSQTKGPTLTAAKKPLAKTPLA. Phosphoserine occurs at positions 869 and 871. The segment covering 907 to 917 has biased composition (polar residues); the sequence is SQSSSNGNTPT. Composition is skewed to low complexity over residues 947–963 and 988–1002; these read SSSA…SSSS and ALLG…SSGS. The segment covering 1009–1020 has biased composition (polar residues); sequence SRSQVGSGQALA. Residues 1032-1058 are compositionally biased toward low complexity; sequence SQHSQHLSSSECSSSSGGCTAVCSSSS. The span at 1063–1080 shows a compositional bias: basic and acidic residues; the sequence is EGRREKERERKPKSDKNK. A compositionally biased stretch (pro residues) spans 1120–1130; that stretch reads QPPPPHAPPAA. Polar residues predominate over residues 1188–1203; it reads PAQQNGHLTPKDQATN. Basic and acidic residues-rich tracts occupy residues 1224–1241 and 1250–1280; these read EHPV…EAKF and FQLK…EQPP. S1360 carries the post-translational modification Phosphoserine. At T1362 the chain carries Phosphothreonine. Residues 1562 to 1581 show a composition bias toward low complexity; sequence NTPSSISPSNSVGSQGSGSN. The interval 1562 to 1586 is disordered; sequence NTPSSISPSNSVGSQGSGSNTPPGR.

This sequence belongs to the AF4 family.

It is found in the nucleus. Its function is as follows. Has a role in transcriptional regulation. Acts in parallel with the Ras/MAPK and the PI3K/PKB pathways in the control of cell identity and cellular growth. Essential for regulation of the cytoskeleton and cell growth but not for cell proliferation or growth rate. Required specifically for the microtubule-based basal transport of lipid droplets. Plays a partially redundant function downstream of Raf in cell fate specification in the developing eye. Pair-rule protein that regulates embryonic cellularization, gastrulation and segmentation. The sequence is that of AF4/FMR2 family member lilli from Drosophila yakuba (Fruit fly).